A 103-amino-acid chain; its full sequence is Ig kappa-b5 chain C region (103 aa).

The region spanning 5-99 is the Ig-like domain; the sequence is PTVLIFPPAP…GAGSVVQSFS (95 aa). Cysteines 26 and 85 form a disulfide.

This is Ig kappa-b5 chain C region from Oryctolagus cuniculus (Rabbit).